We begin with the raw amino-acid sequence, 276 residues long: MIFSNYSLDKLIQNRKSKRIFIGTDTITLQKVVIKIYDDKNKSKESILRDIHIPSILNHPNIIKIKDYVEDLDSNKMYVIYPYIDNTISLRNLPVDKFDVTDLFKLYYIIDILIQVVDAISYMHDNNIVHRDIKPDNILLNDKVHLIDFDLSDQLDNPKFPVRKGTIGTPNFMAPEIWWKINQVDYKKTDIYSLGITMYYLLNKRKLPYKAKKYSELEYQIANHKPKISNSGYPELDKLIMKIIDKDPQNRPTISEIKQKLNHFKTIVDTRVNFNE.

The Protein kinase domain occupies 6-266 (YSLDKLIQNR…IKQKLNHFKT (261 aa)). ATP contacts are provided by residues 12 to 20 (IQNRKSKRI) and Lys-35. Asp-132 acts as the Proton acceptor in catalysis.

The protein belongs to the protein kinase superfamily. Ser/Thr protein kinase family.

It carries out the reaction L-seryl-[protein] + ATP = O-phospho-L-seryl-[protein] + ADP + H(+). The catalysed reaction is L-threonyl-[protein] + ATP = O-phospho-L-threonyl-[protein] + ADP + H(+). The chain is Putative serine/threonine-protein kinase R436 from Acanthamoeba polyphaga (Amoeba).